The sequence spans 64 residues: uncharacterized protein (64 aa).

The next 2 membrane-spanning stretches (helical) occupy residues 4–24 and 35–55; these read IYQYFSLLSFTFSLYFGWLAY and MYLNVSYCALFLSVMVFTFGM.

The protein localises to the cell membrane. This is an uncharacterized protein from Bacillus subtilis (strain 168).